A 438-amino-acid polypeptide reads, in one-letter code: MNTRLALVLCAVGSGVLSFSCARTAEPTPAASTHVPVTTAGALSVTPPSSTDRWYQFSRTDGRVHLRACPAPSQPSAPEHFVPWTEAVRLSAVDAQQELLLINRAGVLPATQLARMQTAPVPRKAPSTPAAETTSLTLTPPALLATQSAEGFYSEPIPNSSPHPCQGTGAVFVRLYTDPLFTTSPQDSAAPFLVRYDVRTARWTSVAYTRALGLPRNAQCTALTHTRGTWYASFKSSEAERVSFAYFSFPSLSSLENLGPTQRREHPIGGKVQVPRPISAAAFRAACTPQRLHLPTASTSSDHHSDLHELLVHRLLARVPLSPLYLSARSPCWASDRSFLKTAHRTADERAHHANALIFHPPRARLSAALLTDSGHLYFVREDGSEGHARLSALPPQFVYTSFTLSGPSLIAGWEEQDFFQVGSTGLLCTEVESLTGT.

The first 20 residues, 1-20 (MNTRLALVLCAVGSGVLSFS), serve as a signal peptide directing secretion. Cysteine 21 carries the N-palmitoyl cysteine lipid modification. Cysteine 21 carries the S-diacylglycerol cysteine lipid modification.

The protein resides in the cell membrane. This is an uncharacterized protein from Treponema pallidum (strain Nichols).